Reading from the N-terminus, the 286-residue chain is Rhomboid-type serine protease 2 (286 aa).

6 helical membrane passes run 18–38 (ITQYPALTVGLSVFTFLLLVI), 66–86 (SFYLLFHRGFTHWLLNVVGLF), 99–119 (VFTGVTLNVLAVTAGLQFCIV), 122–142 (LLYPNTQVIGLSGVVFSFMSF), 164–183 (VSIPTLYSPFIFLIVCMVLI), and 188–210 (FWGHLAGISSGYLLALGYIKFLY). The active-site Nucleophile is serine 133. Histidine 191 is an active-site residue.

The protein belongs to the peptidase S54 family.

Its subcellular location is the golgi apparatus membrane. It localises to the golgi apparatus. It is found in the cis-Golgi network membrane. The catalysed reaction is Cleaves type-1 transmembrane domains using a catalytic dyad composed of serine and histidine that are contributed by different transmembrane domains.. In terms of biological role, probable rhomboid-type serine protease that catalyzes intramembrane proteolysis. The chain is Rhomboid-type serine protease 2 (RBD2) from Debaryomyces hansenii (strain ATCC 36239 / CBS 767 / BCRC 21394 / JCM 1990 / NBRC 0083 / IGC 2968) (Yeast).